The chain runs to 235 residues: Large ribosomal subunit protein uL1 (235 aa).

Belongs to the universal ribosomal protein uL1 family. Part of the 50S ribosomal subunit.

Functionally, binds directly to 23S rRNA. The L1 stalk is quite mobile in the ribosome, and is involved in E site tRNA release. In terms of biological role, protein L1 is also a translational repressor protein, it controls the translation of the L11 operon by binding to its mRNA. The chain is Large ribosomal subunit protein uL1 from Mycolicibacterium vanbaalenii (strain DSM 7251 / JCM 13017 / BCRC 16820 / KCTC 9966 / NRRL B-24157 / PYR-1) (Mycobacterium vanbaalenii).